We begin with the raw amino-acid sequence, 360 residues long: Photosystem II protein D1 (360 aa).

3 consecutive transmembrane segments (helical) span residues 29–46, 118–133, and 142–156; these read YIGWFGVLMFPLLLTATT, HFLLGVACYMGREWEL, and WIAVAYSAPVAAATA. H118 is a binding site for chlorophyll a. Residue Y126 coordinates pheophytin a. Positions 170 and 189 each coordinate [CaMn4O5] cluster. The chain crosses the membrane as a helical span at residues 197–218; the sequence is FHMMGVAGVFGGSLFSAMHGSL. H198 provides a ligand contact to chlorophyll a. A quinone contacts are provided by residues H215 and 264-265; that span reads SF. A Fe cation-binding site is contributed by H215. A Fe cation-binding site is contributed by H272. The helical transmembrane segment at 274 to 288 threads the bilayer; that stretch reads FLALWPVVGIWFTAL. [CaMn4O5] cluster contacts are provided by H332, E333, D342, and A344. Positions 345-360 are excised as a propeptide; that stretch reads SGEVMPVALTAPSINA.

It belongs to the reaction center PufL/M/PsbA/D family. In terms of assembly, PSII is composed of 1 copy each of membrane proteins PsbA, PsbB, PsbC, PsbD, PsbE, PsbF, PsbH, PsbI, PsbJ, PsbK, PsbL, PsbM, PsbT, PsbX, PsbY, PsbZ, Psb30/Ycf12, at least 3 peripheral proteins of the oxygen-evolving complex and a large number of cofactors. It forms dimeric complexes. The D1/D2 heterodimer binds P680, chlorophylls that are the primary electron donor of PSII, and subsequent electron acceptors. It shares a non-heme iron and each subunit binds pheophytin, quinone, additional chlorophylls, carotenoids and lipids. D1 provides most of the ligands for the Mn4-Ca-O5 cluster of the oxygen-evolving complex (OEC). There is also a Cl(-1) ion associated with D1 and D2, which is required for oxygen evolution. The PSII complex binds additional chlorophylls, carotenoids and specific lipids. serves as cofactor. In terms of processing, tyr-161 forms a radical intermediate that is referred to as redox-active TyrZ, YZ or Y-Z. Post-translationally, C-terminally processed by CTPA; processing is essential to allow assembly of the oxygen-evolving complex and thus photosynthetic growth.

It is found in the plastid. The protein resides in the cyanelle thylakoid membrane. The catalysed reaction is 2 a plastoquinone + 4 hnu + 2 H2O = 2 a plastoquinol + O2. Photosystem II (PSII) is a light-driven water:plastoquinone oxidoreductase that uses light energy to abstract electrons from H(2)O, generating O(2) and a proton gradient subsequently used for ATP formation. It consists of a core antenna complex that captures photons, and an electron transfer chain that converts photonic excitation into a charge separation. The D1/D2 (PsbA/PsbD) reaction center heterodimer binds P680, the primary electron donor of PSII as well as several subsequent electron acceptors. This Cyanophora paradoxa protein is Photosystem II protein D1.